The following is a 458-amino-acid chain: Cysteine protease ATG4C (458 aa).

Met1 bears the N-acetylmethionine mark. Cys111 acts as the Nucleophile in catalysis. Residues Asp345 and His347 contribute to the active site. Ser451 bears the Phosphoserine mark. Position 452 is a phosphothreonine (Thr452).

It belongs to the peptidase C54 family.

The protein resides in the cytoplasm. The enzyme catalyses [protein]-C-terminal L-amino acid-glycyl-phosphatidylethanolamide + H2O = [protein]-C-terminal L-amino acid-glycine + a 1,2-diacyl-sn-glycero-3-phosphoethanolamine. Inhibited by N-ethylmaleimide. Its function is as follows. Cysteine protease that plays a key role in autophagy by mediating both proteolytic activation and delipidation of ATG8 family proteins. The protease activity is required for proteolytic activation of ATG8 family proteins: cleaves the C-terminal amino acid of ATG8 proteins MAP1LC3 and GABARAPL2, to reveal a C-terminal glycine. Exposure of the glycine at the C-terminus is essential for ATG8 proteins conjugation to phosphatidylethanolamine (PE) and insertion to membranes, which is necessary for autophagy. In addition to the protease activity, also mediates delipidation of ATG8 family proteins. Catalyzes delipidation of PE-conjugated forms of ATG8 proteins during macroautophagy. Compared to ATG4B, the major protein for proteolytic activation of ATG8 proteins, shows weaker ability to cleave the C-terminal amino acid of ATG8 proteins, while it displays stronger delipidation activity. In contrast to other members of the family, weakly or not involved in phagophore growth during mitophagy. This is Cysteine protease ATG4C from Homo sapiens (Human).